The primary structure comprises 157 residues: Thiocyanate hydrolase subunit beta (157 aa).

As to quaternary structure, heterododecamer consisting of 4 alpha, 4 beta, and 4 gamma subunits.

It catalyses the reaction thiocyanate + H2O + 2 H(+) = carbonyl sulfide + NH4(+). The protein operates within organosulfur degradation; thiocyanate degradation. In terms of biological role, involved in the degradation of thiocyanate. The protein is Thiocyanate hydrolase subunit beta (scnB) of Thiobacillus thioparus.